A 241-amino-acid polypeptide reads, in one-letter code: Orotidine 5'-phosphate decarboxylase (241 aa).

Substrate is bound by residues Asp18, Lys39, 66–75 (DLKFHDIPAT), Thr130, Arg192, Gln201, Gly221, and Arg222. The active-site Proton donor is Lys68.

Belongs to the OMP decarboxylase family. Type 1 subfamily. In terms of assembly, homodimer.

The catalysed reaction is orotidine 5'-phosphate + H(+) = UMP + CO2. The protein operates within pyrimidine metabolism; UMP biosynthesis via de novo pathway; UMP from orotate: step 2/2. Functionally, catalyzes the decarboxylation of orotidine 5'-monophosphate (OMP) to uridine 5'-monophosphate (UMP). In Synechococcus sp. (strain CC9605), this protein is Orotidine 5'-phosphate decarboxylase.